The sequence spans 212 residues: MQLFHLCLIISCSCPTVQASKLCLGWLWGMDIDPYKEFGASVEVLSFLPSDFFPSNRDLLDTASALDREALESPEHCSPHHTALRQAILCWGELMNLATWVGSNLEDPASRELVVSYVNVNMGLKIRQLLWFHISCLTFGRETVLEYLVSFGVWIRTPPAYRPPNAPILSTLPETTVVRRRGRSPRRRTPSPRRRRSQSPRRRRSQSRESQC.

Residues 1-19 (MQLFHLCLIISCSCPTVQA) form the signal peptide. Positions 25–27 (GWL) are HBEAG. A disordered region spans residues 165-212 (NAPILSTLPETTVVRRRGRSPRRRTPSPRRRRSQSPRRRRSQSRESQC). A compositionally biased stretch (basic residues) spans 178-205 (VRRRGRSPRRRTPSPRRRRSQSPRRRRS). The stretch at 184–190 (SPRRRTP) is one 1; half-length repeat. The segment at 184–206 (SPRRRTPSPRRRRSQSPRRRRSQ) is 3 X 8 AA repeats of S-P-R-R-R-R-S-Q. Residues 184 to 212 (SPRRRTPSPRRRRSQSPRRRRSQSRESQC) constitute a propeptide that is removed on maturation. Tandem repeats lie at residues 191 to 198 (SPRRRRSQ) and 199 to 206 (SPRRRRSQ).

The protein belongs to the orthohepadnavirus precore antigen family. As to quaternary structure, homodimerizes. Phosphorylated. Post-translationally, cleaved by host furin.

It is found in the secreted. The protein localises to the host nucleus. In terms of biological role, may regulate immune response to the intracellular capsid in acting as a T-cell tolerogen, by having an immunoregulatory effect which prevents destruction of infected cells by cytotoxic T-cells. This immune regulation may predispose to chronicity during perinatal infections and prevent severe liver injury during adult infections. The sequence is that of External core antigen from Hepatitis B virus genotype C subtype ayw (isolate China/Tibet127/2002) (HBV-C).